The following is a 356-amino-acid chain: Ornithine cyclodeaminase (356 aa).

Residues arginine 53 and lysine 77 each contribute to the L-ornithine site. Residues threonine 92, arginine 120, 147 to 148 (AQ), aspartate 169, threonine 209, 232 to 235 (VGGD), lysine 239, and serine 300 each bind NAD(+). Position 120 (arginine 120) interacts with L-ornithine. L-ornithine is bound at residue aspartate 235. Aspartate 235 functions as the Proton donor/acceptor in the catalytic mechanism. L-ornithine is bound at residue valine 301.

Belongs to the ornithine cyclodeaminase/mu-crystallin family. NAD(+) serves as cofactor.

The enzyme catalyses L-ornithine = L-proline + NH4(+). The protein operates within amino-acid biosynthesis; L-proline biosynthesis; L-proline from L-ornithine: step 1/1. With respect to regulation, is inhibited by L-proline and L-lysine. Is not activated by small concentrations of L-arginine, and is even inhibited by about 50% at 0.5 mM L-arginine. Functionally, catalyzes the conversion of L-ornithine into L-proline with release of ammonia. Is involved in the utilization of octopine, a catabolic pathway that proceeds through L-arginine and L-ornithine to L-proline. Octopine is a predominant opine in plant cells transformed with Ti plasmid pTiAch5. This Agrobacterium tumefaciens (strain Ach5) protein is Ornithine cyclodeaminase.